We begin with the raw amino-acid sequence, 626 residues long: METKQFKAESKRLLDLMINSIYTHKEIFLRELISNSSDAIDKIYYKTLTDDSLKFERDDYYIRVVSDKENRILKIADTGIGMTKEELENNLGVIAKSGSLQFKKENEVKEGYDIIGQFGVGFYSAFLVSDDVTVISKAFGSNEAYKWNSKGAEGYTIEPCEKEAYGTEIILKIKDNTEEENYDEFLEEYTLKSIIKKYSDFIRYPIKMDLTKTKPKEDNKEEFEEYKEEETINSMVPIWRKNKNELKSEDYENFYAEKHYGFDKPIKYIHTSVDGVVSYNAILFIPETTPYDFYTKEYEKGLELYSSGVLIMNKCGDLLPDYFGFVKGIVDSEDLSLNISREILQHDRQLKLIAKNIKTKIKNELESLLKKERDKYEKFYESFGRQLKYGVYSDFGSNKDILQDLLMFYSSKEKKMVTLAEYVSRMPEEQKYIYYAVGESNERIEKLPQIEGVLDKGYEVLYFTDDIDEFAIKMLMNYKEKEFKSVSSGDLGIEGEEKENTSNSDDKKNKELFESMKDILSGKVKDVRASKRLKNHPVCLANEGELSIEMEKVLNAMPNNQNIKADKVLEININHDVFKSLKEAYEGDKEKLKLYTDLLYNQALLIEGLAINDPVEFTNNICKIMK.

An a; substrate-binding region spans residues 1 to 341 (METKQFKAES…SEDLSLNISR (341 aa)). A b region spans residues 342-552 (EILQHDRQLK…EGELSIEMEK (211 aa)). Positions 553–626 (VLNAMPNNQN…FTNNICKIMK (74 aa)) are c.

The protein belongs to the heat shock protein 90 family. As to quaternary structure, homodimer.

The protein localises to the cytoplasm. In terms of biological role, molecular chaperone. Has ATPase activity. The polypeptide is Chaperone protein HtpG (Clostridium botulinum (strain 657 / Type Ba4)).